The following is a 212-amino-acid chain: Tetraspanin-31-A (212 aa).

The Cytoplasmic portion of the chain corresponds to Met-1–Ala-12. A helical transmembrane segment spans residues Leu-13–Trp-33. Residues Gly-34–His-44 lie on the Extracellular side of the membrane. The helical transmembrane segment at Ile-45–Ile-65 threads the bilayer. Residues Gly-66–Gln-72 lie on the Cytoplasmic side of the membrane. The helical transmembrane segment at Val-73–Ser-93 threads the bilayer. The Extracellular portion of the chain corresponds to Cys-94–Lys-175. Asn-100, Asn-109, Asn-117, and Asn-134 each carry an N-linked (GlcNAc...) asparagine glycan. The helical transmembrane segment at Ile-176 to Phe-196 threads the bilayer. Residues Arg-197–Leu-212 lie on the Cytoplasmic side of the membrane.

This sequence belongs to the tetraspanin (TM4SF) family.

Its subcellular location is the membrane. In Xenopus laevis (African clawed frog), this protein is Tetraspanin-31-A (tspan31-a).